Here is a 329-residue protein sequence, read N- to C-terminus: tRNA N6-adenosine threonylcarbamoyltransferase (329 aa).

Histidine 107 and histidine 111 together coordinate Fe cation. Substrate-binding positions include 129-133, aspartate 162, glycine 175, and asparagine 268; that span reads LVSGG. Aspartate 296 is a binding site for Fe cation.

It belongs to the KAE1 / TsaD family. Fe(2+) is required as a cofactor.

The protein localises to the cytoplasm. It catalyses the reaction L-threonylcarbamoyladenylate + adenosine(37) in tRNA = N(6)-L-threonylcarbamoyladenosine(37) in tRNA + AMP + H(+). Required for the formation of a threonylcarbamoyl group on adenosine at position 37 (t(6)A37) in tRNAs that read codons beginning with adenine. Is involved in the transfer of the threonylcarbamoyl moiety of threonylcarbamoyl-AMP (TC-AMP) to the N6 group of A37, together with TsaE and TsaB. TsaD likely plays a direct catalytic role in this reaction. This Nitratiruptor sp. (strain SB155-2) protein is tRNA N6-adenosine threonylcarbamoyltransferase.